Reading from the N-terminus, the 826-residue chain is Receptor-like protein 18 (826 aa).

The Extracellular portion of the chain corresponds to 1 to 780 (MRCQVWNVIE…EEDEEEVISW (780 aa)). LRR repeat units follow at residues 5 to 31 (VWNVIELNLSSSCLHGLLNSKSNIFSL), 32 to 54 (QNLRFLDLSNNHFSGQILSSLGN), 55 to 79 (FSSLTTLDLSENHFSGQIPSSLGNL), 81 to 103 (HLTSLDLTDNNFVGDIPTSLGNL), 104 to 127 (SHLTLLLLGANNLVGEIPFSLGNL), 128 to 150 (SHLTDLTLCENDLAGEIPSSFEN), and 151 to 177 (LSHLTNLDLSQNNLVGEIPSFFGSFNQ). Residues N12 and N54 are each glycosylated (N-linked (GlcNAc...) asparagine). N-linked (GlcNAc...) asparagine glycosylation is found at N102, N126, and N150. An LRR 8; degenerate repeat occupies 178–198 (LVSLAVEENEFTGNFLLILLN). N198, N201, and N219 each carry an N-linked (GlcNAc...) asparagine glycan. 20 LRR repeats span residues 199–223 (LTNLSDLSLSRNQFTGTLPPNMSSL), 225–247 (NLVLFYADANAFTGTIPSSLLNI), 248–271 (PSLSCFDLSDNQLNGNIEFGNISS), 273–294 (LSDLLLGNNNFRGSIHKSISKL), 296–318 (NLYTLDLSHFNTQGSINFSIFSD), 319–343 (LKLLVDLHLSHLNTTTTIDLNTFLS), 345–368 (FKSLDTLDLSGNHISAINKSSVSN), 382–405 (PLLLSRFNLSGCGVTEFPEFLRTQ), 406–429 (QTMEILDISNNKINGQVPGWLWTL), 430–452 (PTLDYVNLSNNTFTGFQRLMVPS), 455–478 (QPSMNYFSGANNNFTGNLPAFICA), 479–500 (FTLQALHLRKNHLSGVFPENIS), 501–524 (ESLKSLDVGHNQLVGKLPRSLVRI), 525–550 (SSLEVLNVENNKINDTFPFWLSSLEE), 552–570 (QVLVLRSNAFHGPMQQTRF), 571–594 (PNLRIIDVSHNHFNGTLPSDFFVN), 637–661 (LKIFTSVDFSRNKFEGEIPKSIGLL), 662–685 (KELHVLNLSSNTFTGHIPSSMGKL), 686–709 (RELESLDVAQNKLSGDIPQDLGDL), and 711–734 (YLAYMNFSHNQLVGPLPGGTQFLT). N268 is a glycosylation site (N-linked (GlcNAc...) asparagine). N312, N331, N362, and N389 each carry an N-linked (GlcNAc...) asparagine glycan. 4 N-linked (GlcNAc...) asparagine glycosylation sites follow: N436, N439, N467, and N498. N538 carries an N-linked (GlcNAc...) asparagine glycan. N-linked (GlcNAc...) asparagine glycosylation is found at N584 and N594. An N-linked (GlcNAc...) asparagine glycan is attached at N668. 2 N-linked (GlcNAc...) asparagine glycosylation sites follow: N716 and N736. A helical transmembrane segment spans residues 781-801 (IAATIGFIPGIAFGLMMGYIL). Residues 802-826 (VCYKPEWFMNVFGKNKSRSTSSTTR) lie on the Cytoplasmic side of the membrane.

Belongs to the RLP family.

The protein localises to the cell membrane. In Arabidopsis thaliana (Mouse-ear cress), this protein is Receptor-like protein 18.